Consider the following 602-residue polypeptide: Elongation factor 4 (602 aa).

The tr-type G domain occupies 7–188 (ENIRNFSIIA…AIIDLVPPPK (182 aa)). GTP contacts are provided by residues 19 to 24 (DHGKST) and 135 to 138 (NKID).

This sequence belongs to the TRAFAC class translation factor GTPase superfamily. Classic translation factor GTPase family. LepA subfamily.

Its subcellular location is the cell inner membrane. The catalysed reaction is GTP + H2O = GDP + phosphate + H(+). Required for accurate and efficient protein synthesis under certain stress conditions. May act as a fidelity factor of the translation reaction, by catalyzing a one-codon backward translocation of tRNAs on improperly translocated ribosomes. Back-translocation proceeds from a post-translocation (POST) complex to a pre-translocation (PRE) complex, thus giving elongation factor G a second chance to translocate the tRNAs correctly. Binds to ribosomes in a GTP-dependent manner. In Chlamydia pneumoniae (Chlamydophila pneumoniae), this protein is Elongation factor 4.